Reading from the N-terminus, the 383-residue chain is 8-amino-7-oxononanoate synthase (383 aa).

Position 23 (arginine 23) interacts with substrate. A pyridoxal 5'-phosphate-binding site is contributed by 110-111 (GF). A substrate-binding site is contributed by histidine 135. Serine 181, histidine 209, and threonine 235 together coordinate pyridoxal 5'-phosphate. At lysine 238 the chain carries N6-(pyridoxal phosphate)lysine. Threonine 351 provides a ligand contact to substrate.

This sequence belongs to the class-II pyridoxal-phosphate-dependent aminotransferase family. BioF subfamily. In terms of assembly, homodimer. Pyridoxal 5'-phosphate is required as a cofactor.

It catalyses the reaction 6-carboxyhexanoyl-[ACP] + L-alanine + H(+) = (8S)-8-amino-7-oxononanoate + holo-[ACP] + CO2. It functions in the pathway cofactor biosynthesis; biotin biosynthesis. In terms of biological role, catalyzes the decarboxylative condensation of pimeloyl-[acyl-carrier protein] and L-alanine to produce 8-amino-7-oxononanoate (AON), [acyl-carrier protein], and carbon dioxide. The polypeptide is 8-amino-7-oxononanoate synthase (Aliivibrio fischeri (strain ATCC 700601 / ES114) (Vibrio fischeri)).